We begin with the raw amino-acid sequence, 542 residues long: Glutamyl-tRNA(Gln) amidotransferase subunit B, mitochondrial (542 aa).

The N-terminal 66 residues, 1-66 (MRVFRRFYQV…PNSHTSFFDI (66 aa)), are a transit peptide targeting the mitochondrion.

It belongs to the GatB/GatE family. GatB subfamily. Subunit of the heterotrimeric GatFAB amidotransferase (AdT) complex, composed of A, B and F subunits.

It localises to the mitochondrion. The enzyme catalyses L-glutamyl-tRNA(Gln) + L-glutamine + ATP + H2O = L-glutaminyl-tRNA(Gln) + L-glutamate + ADP + phosphate + H(+). Its function is as follows. Allows the formation of correctly charged Gln-tRNA(Gln) through the transamidation of misacylated Glu-tRNA(Gln) in the mitochondria. The reaction takes place in the presence of glutamine and ATP through an activated gamma-phospho-Glu-tRNA(Gln). The chain is Glutamyl-tRNA(Gln) amidotransferase subunit B, mitochondrial from Zygosaccharomyces rouxii (strain ATCC 2623 / CBS 732 / NBRC 1130 / NCYC 568 / NRRL Y-229).